Reading from the N-terminus, the 162-residue chain is Phosphopantetheine adenylyltransferase (162 aa).

Position 10 (threonine 10) interacts with substrate. Residues 10 to 11 (TF) and histidine 18 contribute to the ATP site. Substrate is bound by residues lysine 42, leucine 74, and arginine 88. Residues 89 to 91 (GLR), glutamate 99, and 124 to 130 (FSCISST) each bind ATP.

It belongs to the bacterial CoaD family. As to quaternary structure, homohexamer. It depends on Mg(2+) as a cofactor.

It localises to the cytoplasm. It catalyses the reaction (R)-4'-phosphopantetheine + ATP + H(+) = 3'-dephospho-CoA + diphosphate. The protein operates within cofactor biosynthesis; coenzyme A biosynthesis; CoA from (R)-pantothenate: step 4/5. In terms of biological role, reversibly transfers an adenylyl group from ATP to 4'-phosphopantetheine, yielding dephospho-CoA (dPCoA) and pyrophosphate. This Francisella philomiragia subsp. philomiragia (strain ATCC 25017 / CCUG 19701 / FSC 153 / O#319-036) protein is Phosphopantetheine adenylyltransferase.